A 335-amino-acid chain; its full sequence is Fimbrial adhesin PapGIII (335 aa).

Positions 1–21 (MKKWLPAFLFLSLSGCNDALA) are cleaved as a signal peptide.

Belongs to the adhesin PapG family.

It is found in the secreted. It localises to the fimbrium. Functionally, tip adhesin component of type P pili that binds preferentially to Gal-alpha(1-4)-Gal-containing glycolipids such as globoside. This tip is common in E.coli strains that cause human cystitis, but rare in pyelonephritic isolates. The polypeptide is Fimbrial adhesin PapGIII (Escherichia coli).